The chain runs to 532 residues: MSSISHQAAPTRAQHTNSYVQLARQLVTSVDNDPWGDVPPSVYETARVTSWAPWLEGHERRLAWLLERQSAAGSWGEGPTPYRLLPTLSVTEALLSTLRQNTAAGVSRERLAAAVDNGLAALRDLSGTGGWPDTAAIEILAPDLVVLINDHLDQPEVAALPRLGPWARGQRLAQPHGFQAALPDRVAERCQVAGGVPLKLHHTFEGVARRLPRMVPGVPGGLLGSSPAATAAWLATGPDEGRDQAVTALTAVAERYDGLFPEATPISVFERLWISVALARPGLPAACVPTIRAWAAEIYDATGVRGAPGLLPDTDDTAMAVLASALAGSPRDPSPLSAFEAGDHYDCYVGEDTGSSTANAHALQALTAWLSHRPATGDALQARRDLTRDWLLAQQESDGAWRDKWHASPYYATERCVTALSGHTGPTTRDAIRSAADWVLDAQSDDGSWGVWGGTAEETAYAVNILLNSPDHTGTPEATQALKLAENVLREAVHSSGHHHPALWHDKTLYAPQAMAQAEVIAALELLQARRP.

The DXDDTA motif motif lies at 313–318 (DTDDTA). A QXXDGSW motif motif is present at residues 443–449 (QSDDGSW).

The protein belongs to the terpene synthase family. It depends on Mg(2+) as a cofactor.

It catalyses the reaction (2E,6E,10E)-geranylgeranyl diphosphate = (+)-copalyl diphosphate. In terms of biological role, involved in the biosynthesis of the mercapturic acid derivative diterpene cyslabdan A, a potentiator of the beta-lactam antibiotic imipenem. Catalyzes the conversion of geranylgeranyl diphosphate (GGDP) into (+)-copalyl diphosphate. The chain is Copalyl diphosphate synthase from Streptomyces cyslabdanicus.